The sequence spans 208 residues: Putative archaetidylserine decarboxylase proenzyme (208 aa).

The Schiff-base intermediate with substrate; via pyruvic acid role is filled by Ser-172. Ser-172 carries the pyruvic acid (Ser); by autocatalysis modification.

The protein belongs to the phosphatidylserine decarboxylase family. PSD-A subfamily. Heterodimer of a large membrane-associated beta subunit and a small pyruvoyl-containing alpha subunit. The cofactor is pyruvate. Post-translationally, is synthesized initially as an inactive proenzyme. Formation of the active enzyme involves a self-maturation process in which the active site pyruvoyl group is generated from an internal serine residue via an autocatalytic post-translational modification. Two non-identical subunits are generated from the proenzyme in this reaction, and the pyruvate is formed at the N-terminus of the alpha chain, which is derived from the carboxyl end of the proenzyme. The post-translation cleavage follows an unusual pathway, termed non-hydrolytic serinolysis, in which the side chain hydroxyl group of the serine supplies its oxygen atom to form the C-terminus of the beta chain, while the remainder of the serine residue undergoes an oxidative deamination to produce ammonia and the pyruvoyl prosthetic group on the alpha chain.

It is found in the cell membrane. The enzyme catalyses archaetidylserine + H(+) = archaetidylethanolamine + CO2. In terms of biological role, catalyzes the formation of archaetidylethanolamine (PtdEtn) from archaetidylserine (PtdSer). The sequence is that of Putative archaetidylserine decarboxylase proenzyme from Methanosarcina acetivorans (strain ATCC 35395 / DSM 2834 / JCM 12185 / C2A).